A 629-amino-acid polypeptide reads, in one-letter code: 1-deoxy-D-xylulose-5-phosphate synthase (629 aa).

Thiamine diphosphate-binding positions include histidine 72 and 113 to 115; that span reads GHA. Aspartate 144 is a binding site for Mg(2+). Thiamine diphosphate-binding positions include 145–146, asparagine 174, tyrosine 287, and glutamate 370; that span reads GA. Asparagine 174 provides a ligand contact to Mg(2+).

The protein belongs to the transketolase family. DXPS subfamily. In terms of assembly, homodimer. The cofactor is Mg(2+). Thiamine diphosphate is required as a cofactor.

It catalyses the reaction D-glyceraldehyde 3-phosphate + pyruvate + H(+) = 1-deoxy-D-xylulose 5-phosphate + CO2. The protein operates within metabolic intermediate biosynthesis; 1-deoxy-D-xylulose 5-phosphate biosynthesis; 1-deoxy-D-xylulose 5-phosphate from D-glyceraldehyde 3-phosphate and pyruvate: step 1/1. Its function is as follows. Catalyzes the acyloin condensation reaction between C atoms 2 and 3 of pyruvate and glyceraldehyde 3-phosphate to yield 1-deoxy-D-xylulose-5-phosphate (DXP). In Prochlorococcus marinus (strain MIT 9215), this protein is 1-deoxy-D-xylulose-5-phosphate synthase.